The primary structure comprises 96 residues: Fruit-specific protein (96 aa).

3 disulfides stabilise this stretch: Cys-59/Cys-75, Cys-63/Cys-78, and Cys-69/Cys-92.

As to expression, fruit specific.

The polypeptide is Fruit-specific protein (2A11) (Solanum lycopersicum (Tomato)).